The following is a 37-amino-acid chain: Large ribosomal subunit protein bL36 (37 aa).

It belongs to the bacterial ribosomal protein bL36 family.

In Shewanella baltica (strain OS223), this protein is Large ribosomal subunit protein bL36.